The chain runs to 20 residues: Brevinin-1SPb (20 aa).

A disulfide bridge links cysteine 14 with cysteine 20.

In terms of tissue distribution, expressed by the skin glands.

It is found in the secreted. Functionally, antimicrobial peptide with activity against Gram-negative and Gram-positive bacteria (MIC=50 uM against E.coli, MIC=6 uM against S.aureus) and fungi (MIC=13 uM against C.albicans). Shows hemolytic activity on human erythrocytes (HC(50)=25 uM). This chain is Brevinin-1SPb, found in Lithobates septentrionalis (Mink frog).